A 359-amino-acid chain; its full sequence is Nicotinate-nucleotide--dimethylbenzimidazole phosphoribosyltransferase (359 aa).

Glutamate 318 acts as the Proton acceptor in catalysis.

It belongs to the CobT family. In terms of assembly, homodimer.

It carries out the reaction 5,6-dimethylbenzimidazole + nicotinate beta-D-ribonucleotide = alpha-ribazole 5'-phosphate + nicotinate + H(+). The protein operates within nucleoside biosynthesis; alpha-ribazole biosynthesis; alpha-ribazole from 5,6-dimethylbenzimidazole: step 1/2. Functionally, catalyzes the synthesis of alpha-ribazole-5'-phosphate from nicotinate mononucleotide (NAMN) and 5,6-dimethylbenzimidazole (DMB). This chain is Nicotinate-nucleotide--dimethylbenzimidazole phosphoribosyltransferase, found in Shigella sonnei (strain Ss046).